We begin with the raw amino-acid sequence, 264 residues long: Thymidylate synthase (264 aa).

Arg21 is a binding site for dUMP. Residue His51 coordinates (6R)-5,10-methylene-5,6,7,8-tetrahydrofolate. Residue 126-127 participates in dUMP binding; sequence RR. The active-site Nucleophile is Cys146. DUMP contacts are provided by residues 166–169, Asn177, and 207–209; these read RSAD and HIY. Asp169 contacts (6R)-5,10-methylene-5,6,7,8-tetrahydrofolate. Ala263 provides a ligand contact to (6R)-5,10-methylene-5,6,7,8-tetrahydrofolate.

This sequence belongs to the thymidylate synthase family. Bacterial-type ThyA subfamily. In terms of assembly, homodimer.

The protein localises to the cytoplasm. It carries out the reaction dUMP + (6R)-5,10-methylene-5,6,7,8-tetrahydrofolate = 7,8-dihydrofolate + dTMP. The protein operates within pyrimidine metabolism; dTTP biosynthesis. In terms of biological role, catalyzes the reductive methylation of 2'-deoxyuridine-5'-monophosphate (dUMP) to 2'-deoxythymidine-5'-monophosphate (dTMP) while utilizing 5,10-methylenetetrahydrofolate (mTHF) as the methyl donor and reductant in the reaction, yielding dihydrofolate (DHF) as a by-product. This enzymatic reaction provides an intracellular de novo source of dTMP, an essential precursor for DNA biosynthesis. In Brucella abortus (strain 2308), this protein is Thymidylate synthase.